A 548-amino-acid polypeptide reads, in one-letter code: Chaperonin GroEL (548 aa).

ATP-binding positions include 29–32 (THGP), Lys50, 86–90 (DGTTT), Gly414, and Asp493.

Belongs to the chaperonin (HSP60) family. In terms of assembly, forms a cylinder of 14 subunits composed of two heptameric rings stacked back-to-back. Interacts with the co-chaperonin GroES.

It is found in the cytoplasm. It carries out the reaction ATP + H2O + a folded polypeptide = ADP + phosphate + an unfolded polypeptide.. In terms of biological role, together with its co-chaperonin GroES, plays an essential role in assisting protein folding. The GroEL-GroES system forms a nano-cage that allows encapsulation of the non-native substrate proteins and provides a physical environment optimized to promote and accelerate protein folding. The chain is Chaperonin GroEL from Desulfatibacillum aliphaticivorans.